The sequence spans 500 residues: Probable malate:quinone oxidoreductase (500 aa).

Belongs to the MQO family. The cofactor is FAD.

The catalysed reaction is (S)-malate + a quinone = a quinol + oxaloacetate. It functions in the pathway carbohydrate metabolism; tricarboxylic acid cycle; oxaloacetate from (S)-malate (quinone route): step 1/1. The protein is Probable malate:quinone oxidoreductase of Bacillus thuringiensis (strain Al Hakam).